We begin with the raw amino-acid sequence, 58 residues long: DNA-binding protein (58 aa).

2 stretches are compositionally biased toward basic residues: residues 1–19 and 28–58; these read MVRRRRSRSPYRRRSRSRS and SRYRSRSRSRSRSRSRARSRSPYHHHINQYI. A disordered region spans residues 1–58; it reads MVRRRRSRSPYRRRSRSRSRSGSDRSRSRYRSRSRSRSRSRSRARSRSPYHHHINQYI.

Post-translationally, probably phosphorylated in infected cells.

It localises to the virion. Functionally, thought to be responsible for DNA condensation during packaging of the nucleocapsids. This chain is DNA-binding protein (P7.3), found in Cryptophlebia leucotreta granulosis virus (ClGV).